The sequence spans 320 residues: Malate dehydrogenase (320 aa).

NAD(+) contacts are provided by residues 10 to 15 and aspartate 34; that span reads GSGMIG. Residues arginine 83 and arginine 89 each contribute to the substrate site. Residues asparagine 96 and 119–121 each bind NAD(+); that span reads ITN. Residues asparagine 121 and arginine 152 each coordinate substrate. Histidine 176 functions as the Proton acceptor in the catalytic mechanism.

This sequence belongs to the LDH/MDH superfamily. MDH type 3 family.

The catalysed reaction is (S)-malate + NAD(+) = oxaloacetate + NADH + H(+). Its function is as follows. Catalyzes the reversible oxidation of malate to oxaloacetate. This chain is Malate dehydrogenase, found in Brucella canis (strain ATCC 23365 / NCTC 10854 / RM-666).